A 105-amino-acid polypeptide reads, in one-letter code: Urease subunit beta (105 aa).

Belongs to the urease beta subunit family. In terms of assembly, heterotrimer of UreA (gamma), UreB (beta) and UreC (alpha) subunits. Three heterotrimers associate to form the active enzyme.

The protein localises to the cytoplasm. The enzyme catalyses urea + 2 H2O + H(+) = hydrogencarbonate + 2 NH4(+). It participates in nitrogen metabolism; urea degradation; CO(2) and NH(3) from urea (urease route): step 1/1. This Shewanella halifaxensis (strain HAW-EB4) protein is Urease subunit beta.